Reading from the N-terminus, the 295-residue chain is Iron-sulfur cluster carrier protein (295 aa).

ATP is bound at residue 38–45 (GKGGVGKS).

Belongs to the Mrp/NBP35 ATP-binding proteins family. Homodimer.

Its function is as follows. Binds and transfers iron-sulfur (Fe-S) clusters to target apoproteins. Can hydrolyze ATP. The protein is Iron-sulfur cluster carrier protein of Pyrococcus horikoshii (strain ATCC 700860 / DSM 12428 / JCM 9974 / NBRC 100139 / OT-3).